Reading from the N-terminus, the 397-residue chain is Homoserine O-acetyltransferase (397 aa).

The AB hydrolase-1 domain occupies 58 to 368 (NAVLVLHALT…EAKWGHDAFL (311 aa)). S164 acts as the Nucleophile in catalysis. R233 is a substrate binding site. Active-site residues include D331 and H364. D365 contacts substrate.

Belongs to the AB hydrolase superfamily. MetX family. As to quaternary structure, homodimer.

It localises to the cytoplasm. The catalysed reaction is L-homoserine + acetyl-CoA = O-acetyl-L-homoserine + CoA. It functions in the pathway amino-acid biosynthesis; L-methionine biosynthesis via de novo pathway; O-acetyl-L-homoserine from L-homoserine: step 1/1. Transfers an acetyl group from acetyl-CoA to L-homoserine, forming acetyl-L-homoserine. The sequence is that of Homoserine O-acetyltransferase from Solidesulfovibrio magneticus (strain ATCC 700980 / DSM 13731 / RS-1) (Desulfovibrio magneticus).